A 154-amino-acid polypeptide reads, in one-letter code: Cytochrome c' (154 aa).

Residues 1–23 (MKHVLASTAAGLMALGLASSAIA) form the signal peptide. Residues R35, Q36, R95, C144, C147, and H148 each contribute to the heme c site.

As to quaternary structure, homodimer. Post-translationally, binds 1 heme c group covalently per subunit.

Functionally, cytochrome c' is the most widely occurring bacterial c-type cytochrome. Cytochromes c' are high-spin proteins and the heme has no sixth ligand. Their exact function is not known. In Allochromatium vinosum (strain ATCC 17899 / DSM 180 / NBRC 103801 / NCIMB 10441 / D) (Chromatium vinosum), this protein is Cytochrome c' (cycA).